The following is a 242-amino-acid chain: Methylthioribulose-1-phosphate dehydratase (242 aa).

Phosphoserine is present on serine 87. A substrate-binding site is contributed by cysteine 97. Histidine 115 and histidine 117 together coordinate Zn(2+). Glutamate 139 acts as the Proton donor/acceptor in catalysis. Histidine 195 is a Zn(2+) binding site.

The protein belongs to the aldolase class II family. MtnB subfamily. As to quaternary structure, homotetramer. Interacts with APAF1. May interact with CASP1. Zn(2+) serves as cofactor. Isoform 1 is ubiquitously expressed. Isoform 2 is expressed at lower levels and detected in heart, brain, pancreas, liver, placenta, skeletal muscle and kidney.

The protein localises to the cytoplasm. The enzyme catalyses 5-(methylsulfanyl)-D-ribulose 1-phosphate = 5-methylsulfanyl-2,3-dioxopentyl phosphate + H2O. Its pathway is amino-acid biosynthesis; L-methionine biosynthesis via salvage pathway; L-methionine from S-methyl-5-thio-alpha-D-ribose 1-phosphate: step 2/6. Its function is as follows. Catalyzes the dehydration of methylthioribulose-1-phosphate (MTRu-1-P) into 2,3-diketo-5-methylthiopentyl-1-phosphate (DK-MTP-1-P). Functions in the methionine salvage pathway, which plays a key role in cancer, apoptosis, microbial proliferation and inflammation. May inhibit the CASP1-related inflammatory response (pyroptosis), the CASP9-dependent apoptotic pathway and the cytochrome c-dependent and APAF1-mediated cell death. The polypeptide is Methylthioribulose-1-phosphate dehydratase (Homo sapiens (Human)).